The chain runs to 239 residues: Ribonuclease PH (239 aa).

Residues Arg86 and Gly124–Arg126 each bind phosphate.

The protein belongs to the RNase PH family. Homohexameric ring arranged as a trimer of dimers.

The catalysed reaction is tRNA(n+1) + phosphate = tRNA(n) + a ribonucleoside 5'-diphosphate. Its function is as follows. Phosphorolytic 3'-5' exoribonuclease that plays an important role in tRNA 3'-end maturation. Removes nucleotide residues following the 3'-CCA terminus of tRNAs; can also add nucleotides to the ends of RNA molecules by using nucleoside diphosphates as substrates, but this may not be physiologically important. Probably plays a role in initiation of 16S rRNA degradation (leading to ribosome degradation) during starvation. The sequence is that of Ribonuclease PH from Rickettsia africae (strain ESF-5).